Here is a 132-residue protein sequence, read N- to C-terminus: Large ribosomal subunit protein bL17 (132 aa).

Belongs to the bacterial ribosomal protein bL17 family. As to quaternary structure, part of the 50S ribosomal subunit. Contacts protein L32.

The chain is Large ribosomal subunit protein bL17 from Leptothrix cholodnii (strain ATCC 51168 / LMG 8142 / SP-6) (Leptothrix discophora (strain SP-6)).